Reading from the N-terminus, the 118-residue chain is Small ribosomal subunit protein uS13 (118 aa).

Residues 94–118 (GLPLRGQRTRTNARTRKGPRRPIRK) are disordered.

The protein belongs to the universal ribosomal protein uS13 family. In terms of assembly, part of the 30S ribosomal subunit. Forms a loose heterodimer with protein S19. Forms two bridges to the 50S subunit in the 70S ribosome.

Located at the top of the head of the 30S subunit, it contacts several helices of the 16S rRNA. In the 70S ribosome it contacts the 23S rRNA (bridge B1a) and protein L5 of the 50S subunit (bridge B1b), connecting the 2 subunits; these bridges are implicated in subunit movement. Contacts the tRNAs in the A and P-sites. This Thioalkalivibrio sulfidiphilus (strain HL-EbGR7) protein is Small ribosomal subunit protein uS13.